Consider the following 177-residue polypeptide: ATP synthase subunit delta, chloroplastic (177 aa).

The protein belongs to the ATPase delta chain family. As to quaternary structure, F-type ATPases have 2 components, F(1) - the catalytic core - and F(0) - the membrane proton channel. F(1) has five subunits: alpha(3), beta(3), gamma(1), delta(1), epsilon(1). CF(0) has four main subunits: a(1), b(1), b'(1) and c(10-14). The alpha and beta chains form an alternating ring which encloses part of the gamma chain. F(1) is attached to F(0) by a central stalk formed by the gamma and epsilon chains, while a peripheral stalk is formed by the delta, b and b' chains.

It is found in the plastid. The protein localises to the chloroplast thylakoid membrane. Its function is as follows. F(1)F(0) ATP synthase produces ATP from ADP in the presence of a proton or sodium gradient. F-type ATPases consist of two structural domains, F(1) containing the extramembraneous catalytic core and F(0) containing the membrane proton channel, linked together by a central stalk and a peripheral stalk. During catalysis, ATP synthesis in the catalytic domain of F(1) is coupled via a rotary mechanism of the central stalk subunits to proton translocation. Functionally, this protein is part of the stalk that links CF(0) to CF(1). It either transmits conformational changes from CF(0) to CF(1) or is implicated in proton conduction. The polypeptide is ATP synthase subunit delta, chloroplastic (Galdieria sulphuraria (Red alga)).